The following is a 532-amino-acid chain: Apolipoprotein N-acyltransferase (532 aa).

A run of 6 helical transmembrane segments spans residues 37–57 (IFVA…GAIA), 75–95 (WWFG…ALLV), 106–126 (LAVL…AMIA), 128–148 (LLWS…ALAE), 179–199 (VIGL…PALL), and 207–227 (TGIG…AWTL). Residues 245–494 (VQPSIAQAMK…VGVVDSYLPS (250 aa)) enclose the CN hydrolase domain. Residue Glu-289 is the Proton acceptor of the active site. Residue Lys-353 is part of the active site. Cys-406 functions as the Nucleophile in the catalytic mechanism. A helical membrane pass occupies residues 505-525 (GWIQTVLILLTLLAASVGLIL).

This sequence belongs to the CN hydrolase family. Apolipoprotein N-acyltransferase subfamily.

The protein resides in the cell inner membrane. It catalyses the reaction N-terminal S-1,2-diacyl-sn-glyceryl-L-cysteinyl-[lipoprotein] + a glycerophospholipid = N-acyl-S-1,2-diacyl-sn-glyceryl-L-cysteinyl-[lipoprotein] + a 2-acyl-sn-glycero-3-phospholipid + H(+). It functions in the pathway protein modification; lipoprotein biosynthesis (N-acyl transfer). In terms of biological role, catalyzes the phospholipid dependent N-acylation of the N-terminal cysteine of apolipoprotein, the last step in lipoprotein maturation. The sequence is that of Apolipoprotein N-acyltransferase from Brucella melitensis biotype 1 (strain ATCC 23456 / CCUG 17765 / NCTC 10094 / 16M).